Reading from the N-terminus, the 85-residue chain is Photosystem I reaction center subunit PsaK (85 aa).

Transmembrane regions (helical) follow at residues 12-34 and 54-76; these read TVTW…IAVG and GGMG…IGAI.

It belongs to the PsaG/PsaK family.

The protein resides in the cellular thylakoid membrane. This is Photosystem I reaction center subunit PsaK from Parasynechococcus marenigrum (strain WH8102).